The primary structure comprises 200 residues: GTP cyclohydrolase-2 (200 aa).

Position 49–53 (49–53 (RIHSE)) interacts with GTP. Zn(2+) contacts are provided by Cys-54, Cys-65, and Cys-67. GTP contacts are provided by residues Gln-70, 92–94 (EGR), and Thr-114. Asp-126 (proton acceptor) is an active-site residue. The Nucleophile role is filled by Arg-128. Residues Thr-149 and Lys-154 each contribute to the GTP site.

The protein belongs to the GTP cyclohydrolase II family. The cofactor is Zn(2+).

It catalyses the reaction GTP + 4 H2O = 2,5-diamino-6-hydroxy-4-(5-phosphoribosylamino)-pyrimidine + formate + 2 phosphate + 3 H(+). The protein operates within cofactor biosynthesis; riboflavin biosynthesis; 5-amino-6-(D-ribitylamino)uracil from GTP: step 1/4. Catalyzes the conversion of GTP to 2,5-diamino-6-ribosylamino-4(3H)-pyrimidinone 5'-phosphate (DARP), formate and pyrophosphate. This chain is GTP cyclohydrolase-2, found in Saccharophagus degradans (strain 2-40 / ATCC 43961 / DSM 17024).